The chain runs to 271 residues: Tryptophan synthase alpha chain (271 aa).

Catalysis depends on proton acceptor residues glutamate 49 and aspartate 60.

Belongs to the TrpA family. As to quaternary structure, tetramer of two alpha and two beta chains.

It carries out the reaction (1S,2R)-1-C-(indol-3-yl)glycerol 3-phosphate + L-serine = D-glyceraldehyde 3-phosphate + L-tryptophan + H2O. It functions in the pathway amino-acid biosynthesis; L-tryptophan biosynthesis; L-tryptophan from chorismate: step 5/5. Functionally, the alpha subunit is responsible for the aldol cleavage of indoleglycerol phosphate to indole and glyceraldehyde 3-phosphate. This chain is Tryptophan synthase alpha chain, found in Burkholderia thailandensis (strain ATCC 700388 / DSM 13276 / CCUG 48851 / CIP 106301 / E264).